Here is a 97-residue protein sequence, read N- to C-terminus: Large ribosomal subunit protein eL37 (97 aa).

Lys10 carries the post-translational modification N6-acetyllysine. Cys19, Cys22, Cys34, and Cys37 together coordinate Zn(2+). The segment at 19–37 adopts a C4-type zinc-finger fold; it reads CRRCGSKAYHLQKSTCGKC. 2 positions are modified to phosphoserine: Ser96 and Ser97.

The protein belongs to the eukaryotic ribosomal protein eL37 family. As to quaternary structure, component of the large ribosomal subunit.

The protein resides in the cytoplasm. Functionally, component of the large ribosomal subunit. The ribosome is a large ribonucleoprotein complex responsible for the synthesis of proteins in the cell. This chain is Large ribosomal subunit protein eL37 (RPL37), found in Bos taurus (Bovine).